The following is a 253-amino-acid chain: Imidazole glycerol phosphate synthase subunit HisF (253 aa).

Catalysis depends on residues D11 and D130.

The protein belongs to the HisA/HisF family. As to quaternary structure, heterodimer of HisH and HisF.

It localises to the cytoplasm. It carries out the reaction 5-[(5-phospho-1-deoxy-D-ribulos-1-ylimino)methylamino]-1-(5-phospho-beta-D-ribosyl)imidazole-4-carboxamide + L-glutamine = D-erythro-1-(imidazol-4-yl)glycerol 3-phosphate + 5-amino-1-(5-phospho-beta-D-ribosyl)imidazole-4-carboxamide + L-glutamate + H(+). It functions in the pathway amino-acid biosynthesis; L-histidine biosynthesis; L-histidine from 5-phospho-alpha-D-ribose 1-diphosphate: step 5/9. Its function is as follows. IGPS catalyzes the conversion of PRFAR and glutamine to IGP, AICAR and glutamate. The HisF subunit catalyzes the cyclization activity that produces IGP and AICAR from PRFAR using the ammonia provided by the HisH subunit. The protein is Imidazole glycerol phosphate synthase subunit HisF of Geobacter metallireducens (strain ATCC 53774 / DSM 7210 / GS-15).